The sequence spans 954 residues: Leucine--tRNA ligase (954 aa).

Positions 67-78 (PYPSGAGLHVGH) match the 'HIGH' region motif. Positions 729 to 733 (KMGKS) match the 'KMSKS' region motif. Lysine 732 contributes to the ATP binding site.

The protein belongs to the class-I aminoacyl-tRNA synthetase family.

Its subcellular location is the cytoplasm. The enzyme catalyses tRNA(Leu) + L-leucine + ATP = L-leucyl-tRNA(Leu) + AMP + diphosphate. The polypeptide is Leucine--tRNA ligase (Salinispora tropica (strain ATCC BAA-916 / DSM 44818 / JCM 13857 / NBRC 105044 / CNB-440)).